Consider the following 571-residue polypeptide: Transcription factor ABORTED MICROSPORES (571 aa).

Residues 275–284 show a composition bias toward basic and acidic residues; that stretch reads NDKDMNENGR. 3 disordered regions span residues 275–321, 365–390, and 536–571; these read NDKD…AERR, ELQD…MSLN, and DDHQ…YHNQ. The 50-residue stretch at 310 to 359 folds into the bHLH domain; sequence GSQAKNLMAERRRRKKLNDRLYALRSLVPRITKLDRASILGDAINYVKEL. Residues 368-378 show a composition bias toward acidic residues; sequence DELEENSETED. Residues 381–390 show a composition bias toward polar residues; the sequence is NRPQGGMSLN. Basic residues predominate over residues 556–571; sequence AHHHHHHQHINHYHNQ.

In terms of assembly, homodimer. Interacts with ASHR3. Mostly expressed in closed, post-meiotic buds, and, to a lower extent, in pre-meiotic buds. Detected in leaves, stems, and flowers.

The protein localises to the nucleus. Functionally, transcription factor. Plays a crucial role in tapetum development. Required for male fertility and pollen differentiation, especially during the post-meiotic transcriptional regulation of microspore development within the developing anther. Binds E-box regions in the AHL16/TEK promoter. This is Transcription factor ABORTED MICROSPORES (AMS) from Arabidopsis thaliana (Mouse-ear cress).